Reading from the N-terminus, the 389-residue chain is Very-long-chain 3-oxoacyl-CoA reductase (389 aa).

Residues isoleucine 34–valine 54 form a helical membrane-spanning segment. NADP(+)-binding residues include valine 80, aspartate 134, asparagine 162, tyrosine 239, lysine 243, valine 272, and serine 274. The Proton donor role is filled by tyrosine 239. Catalysis depends on lysine 243, which acts as the Lowers pKa of active site Tyr. The tract at residues glutamine 359–histidine 389 is disordered.

The protein belongs to the short-chain dehydrogenases/reductases (SDR) family.

The protein localises to the endoplasmic reticulum membrane. The enzyme catalyses a very-long-chain (3R)-3-hydroxyacyl-CoA + NADP(+) = a very-long-chain 3-oxoacyl-CoA + NADPH + H(+). The protein operates within lipid metabolism; fatty acid biosynthesis. In terms of biological role, component of the microsomal membrane bound fatty acid elongation system, which produces the 26-carbon very long-chain fatty acids (VLCFA) from palmitate. Catalyzes the reduction of the 3-ketoacyl-CoA intermediate that is formed in each cycle of fatty acid elongation. VLCFAs serve as precursors for ceramide and sphingolipids. This chain is Very-long-chain 3-oxoacyl-CoA reductase, found in Yarrowia lipolytica (strain CLIB 122 / E 150) (Yeast).